Here is a 786-residue protein sequence, read N- to C-terminus: Endonuclease MutS2 (786 aa).

Position 335–342 (335–342) interacts with ATP; sequence GPNTGGKT. The Smr domain occupies 711–786; it reads LDLRGERFEN…GLGVTVVELK (76 aa).

This sequence belongs to the DNA mismatch repair MutS family. MutS2 subfamily. Homodimer. Binds to stalled ribosomes, contacting rRNA.

Endonuclease that is involved in the suppression of homologous recombination and thus may have a key role in the control of bacterial genetic diversity. In terms of biological role, acts as a ribosome collision sensor, splitting the ribosome into its 2 subunits. Detects stalled/collided 70S ribosomes which it binds and splits by an ATP-hydrolysis driven conformational change. Acts upstream of the ribosome quality control system (RQC), a ribosome-associated complex that mediates the extraction of incompletely synthesized nascent chains from stalled ribosomes and their subsequent degradation. Probably generates substrates for RQC. The sequence is that of Endonuclease MutS2 from Bacillus thuringiensis (strain Al Hakam).